The sequence spans 514 residues: Peptide chain release factor 3 (514 aa).

In terms of domain architecture, tr-type G spans 8–268 (KKRRTFAIIS…TFLKFAPEPH (261 aa)). Residues 17–24 (SHPDAGKT), 85–89 (DTPGH), and 139–142 (NKLD) each bind GTP.

Belongs to the TRAFAC class translation factor GTPase superfamily. Classic translation factor GTPase family. PrfC subfamily.

Its subcellular location is the cytoplasm. Functionally, increases the formation of ribosomal termination complexes and stimulates activities of RF-1 and RF-2. It binds guanine nucleotides and has strong preference for UGA stop codons. It may interact directly with the ribosome. The stimulation of RF-1 and RF-2 is significantly reduced by GTP and GDP, but not by GMP. The protein is Peptide chain release factor 3 of Streptococcus pneumoniae (strain Hungary19A-6).